Consider the following 129-residue polypeptide: uncharacterized protein (129 aa).

This is an uncharacterized protein from Clostridium perfringens (strain 13 / Type A).